The sequence spans 304 residues: UDP-N-acetylenolpyruvoylglucosamine reductase (304 aa).

Residues 31–196 enclose the FAD-binding PCMH-type domain; the sequence is KVGGPADYLA…ISAKFNLKPG (166 aa). Residue Arg175 is part of the active site. The Proton donor role is filled by Ser225. Glu295 is an active-site residue.

The protein belongs to the MurB family. The cofactor is FAD.

Its subcellular location is the cytoplasm. It carries out the reaction UDP-N-acetyl-alpha-D-muramate + NADP(+) = UDP-N-acetyl-3-O-(1-carboxyvinyl)-alpha-D-glucosamine + NADPH + H(+). Its pathway is cell wall biogenesis; peptidoglycan biosynthesis. Functionally, cell wall formation. This is UDP-N-acetylenolpyruvoylglucosamine reductase from Streptococcus thermophilus (strain CNRZ 1066).